Here is a 227-residue protein sequence, read N- to C-terminus: Ubiquitin domain-containing protein 1 (227 aa).

The interval 1-42 is disordered; that stretch reads MGNCVGRQRRERPAAPGHPRKRAGRNEPLKKERLKWKSDYPM. Residues 24–38 are compositionally biased toward basic and acidic residues; the sequence is GRNEPLKKERLKWKS. The 76-residue stretch at 149–224 folds into the Ubiquitin-like domain; that stretch reads FPLKVRLSTG…IQVIINQPPP (76 aa).

As to quaternary structure, interacts with UBTD1.

In terms of biological role, may be involved in the regulation of cellular senescence through a positive feedback loop with TP53. Is a TP53 downstream target gene that increases the stability of TP53 protein by promoting the ubiquitination and degradation of MDM2. This chain is Ubiquitin domain-containing protein 1 (Ubtd1), found in Mus musculus (Mouse).